The chain runs to 420 residues: D-tagatose-1,6-bisphosphate aldolase subunit GatZ (420 aa).

Belongs to the GatZ/KbaZ family. GatZ subfamily. In terms of assembly, forms a complex with GatY.

The protein operates within carbohydrate metabolism; D-tagatose 6-phosphate degradation; D-glyceraldehyde 3-phosphate and glycerone phosphate from D-tagatose 6-phosphate: step 2/2. Component of the tagatose-1,6-bisphosphate aldolase GatYZ that is required for full activity and stability of the Y subunit. Could have a chaperone-like function for the proper and stable folding of GatY. When expressed alone, GatZ does not show any aldolase activity. Is involved in the catabolism of galactitol. The chain is D-tagatose-1,6-bisphosphate aldolase subunit GatZ from Escherichia coli O6:K15:H31 (strain 536 / UPEC).